We begin with the raw amino-acid sequence, 542 residues long: Probable folate-biopterin transporter 8, chloroplastic (542 aa).

The N-terminal 78 residues, 1 to 78 (MERIMINPLL…GVSEFEETAR (78 aa)), are a transit peptide targeting the chloroplast. Positions 24-45 (LSSIHRQQQQQERQSNNNTLFM) are disordered. 12 helical membrane-spanning segments follow: residues 103-123 (FPWL…PSTL), 132-152 (LPMV…IGSG), 155-175 (VPYI…MGIF), 181-201 (VLPS…ITEV), 223-243 (ALMA…YLLL), 246-266 (PPKI…VVSL), 308-328 (LIWA…VFCY), 338-358 (SVIG…TVVY), 369-389 (PLIH…YILV), 404-424 (VLCF…PFAV), 446-466 (LCLS…LIGI), and 477-497 (GILI…LVPM). Residues 506-542 (GKRGISKRSRRNRRVGRVVDKESVTYRRERESEEAQR) form a disordered region. Residues 509-521 (GISKRSRRNRRVG) show a composition bias toward basic residues. Residues 522–542 (RVVDKESVTYRRERESEEAQR) are compositionally biased toward basic and acidic residues.

This sequence belongs to the major facilitator superfamily. Folate-biopterin transporter (TC 2.A.71) family.

The protein resides in the plastid. Its subcellular location is the chloroplast membrane. Could mediate folate transport. The polypeptide is Probable folate-biopterin transporter 8, chloroplastic (Arabidopsis thaliana (Mouse-ear cress)).